A 61-amino-acid polypeptide reads, in one-letter code: Metallothionein-1B (61 aa).

A beta region spans residues 1-29; that stretch reads MDPNCSCPTSGSCSCAGSCTCKACRCPSC. The a divalent metal cation site is built by C5, C7, C13, C15, C19, C21, C24, C26, C29, C33, C34, C36, C37, C41, C44, C48, C50, C57, C59, and C60. Positions 30–61 are alpha; it reads KKSCCSCCPVGCAKCAQGCVCKGASDKCSCCA.

Belongs to the metallothionein superfamily. Type 1 family.

Metallothioneins have a high content of cysteine residues that bind various heavy metals; these proteins are transcriptionally regulated by both heavy metals and glucocorticoids. In Ovis aries (Sheep), this protein is Metallothionein-1B (MT1B).